The following is a 606-amino-acid chain: Vacuolar calcium ion transporter (606 aa).

The segment at 1-110 (MSPPRRVSFP…NSLDPNPGLM (110 aa)) is disordered. The Cytoplasmic portion of the chain corresponds to 1-137 (MSPPRRVSFP…PTYWGSMKAA (137 aa)). Residues 18–30 (PPLADSPLSSPKL) show a composition bias toward low complexity. The segment covering 36-56 (QSSSTPIVSSNLPTDTTNSAS) has biased composition (polar residues). The helical transmembrane segment at 138 to 158 (ITSTWLNVLLVFIPIGWALYL) threads the bilayer. The Vacuolar portion of the chain corresponds to 159–170 (AKHNGGKDSISD). The helical transmembrane segment at 171–191 (TAVFCCTFIAIIPLAGLLGFA) threads the bilayer. Residues 192–204 (TEEAALRLGQTLG) are Cytoplasmic-facing. The helical transmembrane segment at 205–225 (GLLNATLGNAVELIVAILALI) threads the bilayer. Over 226–236 (KCELQVVQSSL) the chain is Vacuolar. Residues 237–257 (VGSILSNILLVLGMCFFAGGV) form a helical membrane-spanning segment. Topologically, residues 258-272 (RFAEQAIKSTAAQLN) are cytoplasmic. A helical transmembrane segment spans residues 273-293 (ASLLLIAVIAVLIPSAFHFSI). The Vacuolar portion of the chain corresponds to 294 to 313 (SSSTSNTDASELANGEGADL). The helical transmembrane segment at 314-334 (LSMSHAVSILLLILYLGYLLF) threads the bilayer. Residues 335–437 (QMWTHATYYV…EEEEETPQMN (103 aa)) are Cytoplasmic-facing. Residues 376-434 (DEEESYSTATTVSDAAVPPSARAEGGEVPATHGPGTAAAETGNRVEHEDAEEEEEEETP) form a disordered region. Acidic residues predominate over residues 423 to 433 (EDAEEEEEEET). A helical transmembrane segment spans residues 438–458 (VVCTIALMVIDTVLVGVTAEF). At 459 to 477 (LVDSINGMVESNPSLSAEW) the chain is on the vacuolar side. The chain crosses the membrane as a helical span at residues 478–498 (VGLILLPIVGNAAEHFTAVSV). The Cytoplasmic portion of the chain corresponds to 499–505 (SVKDKLD). Residues 506–526 (LSISVAVGSSIQIALFVIPVI) traverse the membrane as a helical segment. Residues 527–535 (ELLAWTIGK) are Vacuolar-facing. The helical transmembrane segment at 536–556 (PMTLLFDPYESIVLFLSVLIV) threads the bilayer. Residues 557–566 (NQTLADGRSN) are Cytoplasmic-facing. A helical membrane pass occupies residues 567–587 (WMEGMVLMMLYIIIAVSFWYY). The Vacuolar portion of the chain corresponds to 588–606 (PGSTTATLLGCQDSSSVTG).

This sequence belongs to the Ca(2+):cation antiporter (CaCA) (TC 2.A.19) family.

The protein resides in the vacuole membrane. Its function is as follows. Has a role in promoting intracellular calcium ion sequestration via the exchange of calcium ions for hydrogen ions across the vacuolar membrane. This is Vacuolar calcium ion transporter from Cryptococcus neoformans var. grubii serotype A (strain H99 / ATCC 208821 / CBS 10515 / FGSC 9487) (Filobasidiella neoformans var. grubii).